The chain runs to 131 residues: Peptide methionine sulfoxide reductase MsrB (131 aa).

Residues 9–131 (DEDWKKELTP…NSASLKFQKE (123 aa)) form the MsrB domain. 4 residues coordinate Zn(2+): Cys-48, Cys-51, Cys-97, and Cys-100. The active-site Nucleophile is the Cys-120.

The protein belongs to the MsrB Met sulfoxide reductase family. Requires Zn(2+) as cofactor.

It carries out the reaction L-methionyl-[protein] + [thioredoxin]-disulfide + H2O = L-methionyl-(R)-S-oxide-[protein] + [thioredoxin]-dithiol. This Leptospira interrogans serogroup Icterohaemorrhagiae serovar Lai (strain 56601) protein is Peptide methionine sulfoxide reductase MsrB.